The chain runs to 393 residues: Formate-dependent phosphoribosylglycinamide formyltransferase (393 aa).

N(1)-(5-phospho-beta-D-ribosyl)glycinamide-binding positions include 22 to 23 (EL) and glutamate 82. ATP is bound by residues arginine 114, lysine 155, 160–165 (SSGKGQ), 195–198 (EGFI), and glutamate 203. Residues 119–308 (RLAAEELDLP…QFALHARAIL (190 aa)) enclose the ATP-grasp domain. 2 residues coordinate Mg(2+): glutamate 267 and glutamate 279. Residues aspartate 286, lysine 356, and 363-364 (RR) contribute to the N(1)-(5-phospho-beta-D-ribosyl)glycinamide site.

It belongs to the PurK/PurT family. Homodimer.

It carries out the reaction N(1)-(5-phospho-beta-D-ribosyl)glycinamide + formate + ATP = N(2)-formyl-N(1)-(5-phospho-beta-D-ribosyl)glycinamide + ADP + phosphate + H(+). It participates in purine metabolism; IMP biosynthesis via de novo pathway; N(2)-formyl-N(1)-(5-phospho-D-ribosyl)glycinamide from N(1)-(5-phospho-D-ribosyl)glycinamide (formate route): step 1/1. Involved in the de novo purine biosynthesis. Catalyzes the transfer of formate to 5-phospho-ribosyl-glycinamide (GAR), producing 5-phospho-ribosyl-N-formylglycinamide (FGAR). Formate is provided by PurU via hydrolysis of 10-formyl-tetrahydrofolate. The polypeptide is Formate-dependent phosphoribosylglycinamide formyltransferase (Pseudomonas putida (strain W619)).